A 1024-amino-acid chain; its full sequence is E3 ISG15--protein ligase HERC5 (1024 aa).

The segment covering 1 to 13 (MERRSRRKSRRNG) has biased composition (basic residues). A disordered region spans residues 1–28 (MERRSRRKSRRNGRSTAGKAAATQPAKS). RCC1 repeat units lie at residues 96–155 (NMKI…ALSK), 156–208 (GGEL…ALSM), 209–260 (SGNI…LLTQ), 262–312 (GLLF…AYVS), and 314–364 (LGKV…LIMI). In terms of domain architecture, HECT spans 702–1024 (ENEDLRKELW…EAINNNRGFG (323 aa)). Residue cysteine 994 is the Glycyl thioester intermediate of the active site.

As to quaternary structure, (Microbial infection) Interacts with human cytomegalovirus protein UL26; this interaction inhibits global protein ISGylation. In terms of assembly, (Microbial infection) Interacts with Kaposi's sarcoma-associated herpesvirus protein v-IRF1; this interaction inhibits global protein ISGylation. Binds to CCNA1, CCNB1, CCND1 and CCNE1. Interacts with UBE2L6. Interacts with IRF3, this interaction is marginal in resting cells but enhanced upon viral infection. Interacts with influenza A virus NS1. ISGylated. In terms of tissue distribution, expressed in testis and to a lesser degree in brain, ovary and placenta. Found in most tissues at low levels.

It localises to the cytoplasm. The protein resides in the perinuclear region. Its function is as follows. Major E3 ligase for ISG15 conjugation. Acts as a positive regulator of innate antiviral response in cells induced by interferon. Functions as part of the ISGylation machinery that recognizes target proteins in a broad and relatively non-specific manner. Catalyzes ISGylation of IRF3 which results in sustained activation, it attenuates IRF3-PIN1 interaction, which antagonizes IRF3 ubiquitination and degradation, and boosts the antiviral response. Mediates ISGylation of the phosphatase PTEN leading to its degradation, thus alleviating its suppression of the PI3K-AKT signaling pathway and promoting the production of cytokines that facilitate bacterial clearance. Interferes with the function of key viral structural proteins such as ebolavirus structural protein VP40 or HIV-1 protein GAG. Catalyzes ISGylation of influenza A viral NS1 which attenuates virulence; ISGylated NS1 fails to form homodimers and thus to interact with its RNA targets. Catalyzes ISGylation of papillomavirus type 16 L1 protein which results in dominant-negative effect on virus infectivity. Physically associated with polyribosomes, broadly modifies newly synthesized proteins in a cotranslational manner. In an interferon-stimulated cell, newly translated viral proteins are primary targets of ISG15. Promotes parkin/PRKN ubiquitin E3 ligase activity by suppressing the intramolecular interaction that maintains its autoinhibited conformation. (Microbial infection) Functions as an E3 ligase for ISGylation of hepatitis B virus protein X leading to enhanced viral replication due to increased interferon resistance. The polypeptide is E3 ISG15--protein ligase HERC5 (HERC5) (Homo sapiens (Human)).